Here is a 671-residue protein sequence, read N- to C-terminus: Phosphoenolpyruvate carboxykinase (ATP) 1 (671 aa).

A compositionally biased stretch (low complexity) spans 1 to 10 (MSAGNGNATN). A disordered region spans residues 1 to 44 (MSAGNGNATNGDGGFSFPKGPVMPKITTGAAKRGSGVCHDDSGP). The residue at position 2 (serine 2) is an N-acetylserine. Serine 62 bears the Phosphoserine mark. A Phosphothreonine modification is found at threonine 66. The interval 100 to 127 (TRESGPKVVRGDPAEKKTDGSTTPAYAH) is disordered. The segment covering 108 to 118 (VRGDPAEKKTD) has biased composition (basic and acidic residues). Arginine 189 serves as a coordination point for substrate. Ca(2+) contacts are provided by histidine 270 and asparagine 271. Residues tyrosine 328 and lysine 334 each contribute to the substrate site. ATP is bound by residues lysine 334, histidine 353, and 369–377 (GLSGTGKTT). Mn(2+) is bound by residues lysine 334 and histidine 353. Aspartate 390 is a binding site for Mn(2+). A Ca(2+)-binding site is contributed by glycine 404. ATP contacts are provided by residues glutamate 418, arginine 455, 574-575 (RI), isoleucine 575, and threonine 580. Arginine 455 provides a ligand contact to substrate.

The protein belongs to the phosphoenolpyruvate carboxykinase (ATP) family. In terms of assembly, monomer. Mn(2+) is required as a cofactor. As to expression, expressed in cotyledons, flowers, siliques, seeds, leaves, stems and roots. Localized in mid-veins.

Its subcellular location is the cytoplasm. It catalyses the reaction oxaloacetate + ATP = phosphoenolpyruvate + ADP + CO2. It participates in carbohydrate biosynthesis; gluconeogenesis. Its activity is regulated as follows. Allosterically activated by calcium. It may represent the only case of a monomeric, allosteric enzyme. Its function is as follows. Involved in the gluconeogenesis. Catalyzes the conversion of oxaloacetate (OAA) to phosphoenolpyruvate (PEP) through direct phosphoryl transfer between the nucleoside triphosphate and OAA. The sequence is that of Phosphoenolpyruvate carboxykinase (ATP) 1 from Arabidopsis thaliana (Mouse-ear cress).